A 422-amino-acid chain; its full sequence is Serine protease HTRA2, mitochondrial (422 aa).

A mitochondrion-targeting transit peptide spans 1–17 (MALRGCHRLEVIFKRCI). A propeptide spanning residues 18–74 (ASPVLHSQAGNRRSSQLAIKGVDPNSNGNSGQYQQNGEHKEKGWRRLVRFFVPFSLG) is cleaved from the precursor. The disordered stretch occupies residues 33–55 (QLAIKGVDPNSNGNSGQYQQNGE). Residues 42–53 (NSNGNSGQYQQN) show a composition bias toward low complexity. A helical membrane pass occupies residues 64–82 (LVRFFVPFSLGAAVSAAII). 2 consecutive short sequence motifs (IAP-binding) follow at residues 75–78 (AAVS) and 94–97 (SKMT). A serine protease region spans residues 139–302 (SNGSGFIIEQ…IPIDYVKVFL (164 aa)). Active-site charge relay system residues include His-157, Asp-189, and Ser-266. A PDZ domain is found at 325-410 (MGITMLTLTP…TLDIVILRGV (86 aa)).

Belongs to the peptidase S1C family. As to quaternary structure, interacts with th/DIAP1 (via BIR 2 domain).

It is found in the mitochondrion intermembrane space. The protein resides in the mitochondrion membrane. It catalyses the reaction Cleavage of non-polar aliphatic amino-acids at the P1 position, with a preference for Val, Ile and Met. At the P2 and P3 positions, Arg is selected most strongly with a secondary preference for other hydrophilic residues.. Its function is as follows. Serine protease that shows proteolytic activity against a non-specific substrate beta-casein. Promotes or induces cell death either by direct binding to and inhibition of BIRC proteins (also called inhibitor of apoptosis proteins, IAPs), leading to an increase in caspase activity, or by a BIRC inhibition-independent, caspase-independent and serine protease activity-dependent mechanism. Can antagonize antiapoptotic activity of th/Diap1 by directly inducing the degradation of th/Diap1. The sequence is that of Serine protease HTRA2, mitochondrial from Drosophila simulans (Fruit fly).